The following is a 235-amino-acid chain: Homeobox-leucine zipper protein ATHB-12 (235 aa).

A DNA-binding region (homeobox) is located at residues 27-86; the sequence is KSNNQKRFSEEQIKSLELIFESETRLEPRKKVQVARELGLQPRQVAIWFQNKRARWKTKQ. Residues 87–122 are leucine-zipper; it reads LEKEYNTLRANYNNLASQFEIMKKEKQSLVSELQRL. 2 stretches are compositionally biased toward basic and acidic residues: residues 128–138 and 152–162; these read RPKEEKHHECC and HNGKSEPEGRL. The segment at 128–167 is disordered; sequence RPKEEKHHECCGDQGLALSSSTESHNGKSEPEGRLDQGSV.

The protein belongs to the HD-ZIP homeobox family. Class I subfamily. Interacts with TFIIB1. In terms of tissue distribution, widely expressed.

It is found in the nucleus. Its function is as follows. Probable transcription activator that may act as growth regulators in response to water deficit. The sequence is that of Homeobox-leucine zipper protein ATHB-12 (ATHB-12) from Arabidopsis thaliana (Mouse-ear cress).